Consider the following 1182-residue polypeptide: CRISPR-associated endoribonuclease Cas13a (1182 aa).

Residues 132-279 (FNNLIEKVQN…ENNSDNKLKQ (148 aa)) adopt a coiled-coil conformation. Positions 366-508 (YIKNTGQLET…NNEEIKGYFI (143 aa)) are HEPN-like fold 1. Residues 896–955 (KVEKENIEDYNKKEEIEQKKKSNIEKLQDLKVELHKKWEQNKITEKEIEKYNNTTRKINE) are a coiled coil. The segment at 965 to 1120 (LQNVYLLHEM…QNHILKSTKT (156 aa)) is HEPN-like fold 2.

This sequence belongs to the CRISPR-associated endoribonuclease Cas13a family. It depends on a divalent metal cation as a cofactor.

Target RNA acts as an activator for non-specific ssRNA degradation. Functionally, CRISPR (clustered regularly interspaced short palindromic repeat), is an adaptive immune system that provides protection against mobile genetic elements (viruses, transposable elements and conjugative plasmids). CRISPR clusters contain sequences complementary to antecedent mobile elements and target invading nucleic acids. Unlike many single-component effectors, this CRISPR-Cas system targets RNA. CRISPR clusters are transcribed from pre-CRISPR RNA (crRNA) and processed into crRNA by this protein. Cleaves linear target ssRNA in a pre-crRNA-dependent fashion, preferentially before U residues. Binding a viable target RNA target activates this protein for non-specific RNA degradation in vitro (called collateral RNA degradation), which is fairly sensitive as it requires picomolar levels of viable target RNA. The polypeptide is CRISPR-associated endoribonuclease Cas13a (Leptotrichia wadei (strain F0279)).